The following is a 205-amino-acid chain: MDYWILLVLAFLVADKSWHLTGLLATKLTSPERLQQLIRERQELHQQQQSLSAQDHYAKWTKNNRRLDVLDRDIARVRKNYLESVEATKARLAKLKLLVVTVPFTALKFYKGKLPVYALPKGMFPRFIEGTLEHGWLYMALAPLNMKQFSEGASVAVSLGIWLFALLRVLGAIEFVLETLREQNPQVATETAKVHARTAQAASAN.

Residues 1 to 3 (MDY) are Lumenal-facing. Residues 4–24 (WILLVLAFLVADKSWHLTGLL) traverse the membrane as a helical segment. Residues 25 to 96 (ATKLTSPERL…ATKARLAKLK (72 aa)) are Cytoplasmic-facing. Positions 32–96 (ERLQQLIRER…ATKARLAKLK (65 aa)) form a coiled coil. A helical membrane pass occupies residues 97–117 (LLVVTVPFTALKFYKGKLPVY). The Lumenal portion of the chain corresponds to 118–156 (ALPKGMFPRFIEGTLEHGWLYMALAPLNMKQFSEGASVA). Residues 157–173 (VSLGIWLFALLRVLGAI) traverse the membrane as a helical segment. The Cytoplasmic portion of the chain corresponds to 174-205 (EFVLETLREQNPQVATETAKVHARTAQAASAN).

This sequence belongs to the WRB/GET1 family. In terms of assembly, component of the Golgi to ER traffic (GET) complex, which is composed of GET1, GET2 and GET3. Within the complex, GET1 and GET2 form a heterotetramer which is stabilized by phosphatidylinositol binding and which binds to the GET3 homodimer.

Its subcellular location is the endoplasmic reticulum membrane. The protein resides in the golgi apparatus membrane. Functionally, required for the post-translational delivery of tail-anchored (TA) proteins to the endoplasmic reticulum. Together with GET2, acts as a membrane receptor for soluble GET3, which recognizes and selectively binds the transmembrane domain of TA proteins in the cytosol. The GET complex cooperates with the HDEL receptor ERD2 to mediate the ATP-dependent retrieval of resident ER proteins that contain a C-terminal H-D-E-L retention signal from the Golgi to the ER. The chain is Golgi to ER traffic protein 1 from Eremothecium gossypii (strain ATCC 10895 / CBS 109.51 / FGSC 9923 / NRRL Y-1056) (Yeast).